A 147-amino-acid chain; its full sequence is Lysozyme C-2 (147 aa).

The N-terminal stretch at 1-18 (MKALVILGFLFLSVAVQG) is a signal peptide. The C-type lysozyme domain occupies 19–147 (KVFERCELAR…VSSYVEGCTL (129 aa)). Intrachain disulfides connect Cys24/Cys145, Cys48/Cys133, Cys83/Cys99, and Cys95/Cys113. Catalysis depends on residues Glu53 and Asp71.

It belongs to the glycosyl hydrolase 22 family. Monomer. As to expression, stomach-specific.

The enzyme catalyses Hydrolysis of (1-&gt;4)-beta-linkages between N-acetylmuramic acid and N-acetyl-D-glucosamine residues in a peptidoglycan and between N-acetyl-D-glucosamine residues in chitodextrins.. Functionally, lysozymes have primarily a bacteriolytic function; those in tissues and body fluids are associated with the monocyte-macrophage system and enhance the activity of immunoagents. This Bos taurus (Bovine) protein is Lysozyme C-2 (LYZ2).